We begin with the raw amino-acid sequence, 340 residues long: Outer membrane protein B (340 aa).

The N-terminal stretch at 1-26 (MSSKLVNSLRLTFLSFLGIVSTSLDA) is a signal peptide.

This sequence belongs to the chlamydial OMP family.

It localises to the cell outer membrane. In Chlamydia muridarum (strain MoPn / Nigg), this protein is Outer membrane protein B (ompB).